Consider the following 404-residue polypeptide: Serine/threonine transporter SstT (404 aa).

Helical transmembrane passes span Ile-17–Ile-37, Ile-39–Leu-59, Met-75–Ile-95, Ala-138–Leu-158, Ile-179–Val-199, Leu-212–Leu-232, Ile-287–Leu-307, Phe-319–Val-339, and Phe-354–Ile-374.

It belongs to the dicarboxylate/amino acid:cation symporter (DAACS) (TC 2.A.23) family.

Its subcellular location is the cell membrane. The enzyme catalyses L-serine(in) + Na(+)(in) = L-serine(out) + Na(+)(out). The catalysed reaction is L-threonine(in) + Na(+)(in) = L-threonine(out) + Na(+)(out). Its function is as follows. Involved in the import of serine and threonine into the cell, with the concomitant import of sodium (symport system). This chain is Serine/threonine transporter SstT, found in Streptococcus equi subsp. equi (strain 4047).